Reading from the N-terminus, the 328-residue chain is Protoheme IX farnesyltransferase (328 aa).

A run of 8 helical transmembrane segments spans residues 31-51 (IILL…KGEV), 53-73 (LFLL…ANAI), 120-140 (VFAN…YVGV), 153-173 (IVIG…AVTG), 181-201 (LLFA…AIYI), 226-246 (IWVY…PLHV), 250-270 (IYAV…WQLL), and 285-305 (YSIY…LPFT).

The protein belongs to the UbiA prenyltransferase family. Protoheme IX farnesyltransferase subfamily.

Its subcellular location is the cell inner membrane. It catalyses the reaction heme b + (2E,6E)-farnesyl diphosphate + H2O = Fe(II)-heme o + diphosphate. It functions in the pathway porphyrin-containing compound metabolism; heme O biosynthesis; heme O from protoheme: step 1/1. Its function is as follows. Converts heme B (protoheme IX) to heme O by substitution of the vinyl group on carbon 2 of heme B porphyrin ring with a hydroxyethyl farnesyl side group. In Trichodesmium erythraeum (strain IMS101), this protein is Protoheme IX farnesyltransferase.